The primary structure comprises 228 residues: NAD(P)H-hydrate epimerase (228 aa).

Residues 9 to 214 (AQNIDQELFN…DLLLKKYELE (206 aa)) form the YjeF N-terminal domain. 60-64 (NNGGD) is a (6S)-NADPHX binding site. K(+) contacts are provided by N61 and D125. Residues 129 to 135 (GFSFKGE) and D158 contribute to the (6S)-NADPHX site. S161 serves as a coordination point for K(+).

The protein belongs to the NnrE/AIBP family. Requires K(+) as cofactor.

It carries out the reaction (6R)-NADHX = (6S)-NADHX. It catalyses the reaction (6R)-NADPHX = (6S)-NADPHX. In terms of biological role, catalyzes the epimerization of the S- and R-forms of NAD(P)HX, a damaged form of NAD(P)H that is a result of enzymatic or heat-dependent hydration. This is a prerequisite for the S-specific NAD(P)H-hydrate dehydratase to allow the repair of both epimers of NAD(P)HX. In Nematostella vectensis (Starlet sea anemone), this protein is NAD(P)H-hydrate epimerase.